Reading from the N-terminus, the 246-residue chain is MNDITKRPSGRTADQLRDVRITRHYTKHAEGSVLVEFGDTKVICTASIAESVPAFLRDRGQGWLTAEYGMLPRATHTRSDREAARGKQTGRTQEIQRLIGRALRSVFDLERLGARTLHIDCDVIQADGGTRTASITGAFVAARDAVAKLLATGRIETSPITDYVAAISVGVFDGIPVLDLDYDEDSQCDTDMNVVMTGDGGFVEIQGTAEGVPFSRDEMNKLLDLAQAGIATLIAKQKEALESKGE.

Residues arginine 91 and glycine 129–arginine 131 contribute to the phosphate site.

Belongs to the RNase PH family. As to quaternary structure, homohexameric ring arranged as a trimer of dimers.

It carries out the reaction tRNA(n+1) + phosphate = tRNA(n) + a ribonucleoside 5'-diphosphate. In terms of biological role, phosphorolytic 3'-5' exoribonuclease that plays an important role in tRNA 3'-end maturation. Removes nucleotide residues following the 3'-CCA terminus of tRNAs; can also add nucleotides to the ends of RNA molecules by using nucleoside diphosphates as substrates, but this may not be physiologically important. Probably plays a role in initiation of 16S rRNA degradation (leading to ribosome degradation) during starvation. In Paraburkholderia phymatum (strain DSM 17167 / CIP 108236 / LMG 21445 / STM815) (Burkholderia phymatum), this protein is Ribonuclease PH.